A 760-amino-acid chain; its full sequence is MDPVPVRCLLNSISRYLHLVACQTIRFNPIQTCIGNMVLLLKLLKPLLDEVVDCKIPSDDCLYKGCEDLDSVVNQAREFLEDWSPKLSKLFGVFQCEVLLGKVQTCSLEISRILLQLSQSSPVTSSVQSVERCVQETESFKQEGTLMELMENALRNQKDDITSLDNNHLESIIQMLGLISNQDLLKESITVEKERIRSQASKSEEDMEQTEQLIELVLCIREHMLKTEFLEVAKGISIPPYFRCPLSTELMLDPVIVASGQTFDRTSIKKWLDNGLAVCPRTRQVLTHQELIPNYTVKAMIASWLEANRINLATNSCHQYDGGDASSMANNMGSQDFNRTESFRFSLRSSSLTSRSSLETGNGFEKLKINVSASLCGESQSKDLEIFELLSPGQSYTHSRSESVCSVVSSVDYVPSVTHETESILGNHQSSSEMSPKKNLESSNNVNHEHSAAKTYECSVHDLDDSGTMTTSHTIKLVEDLKSGSNKVKTAAAAEIRHLTINSIENRVHIGRCGAITPLLSLLYSEEKLTQEHAVTALLNLSISELNKAMIVEVGAIEPLVHVLNTGNDRAKENSAASLFSLSVLQVNRERIGQSNAAIQALVNLLGKGTFRGKKDAASALFNLSITHDNKARIVQAKAVKYLVELLDPDLEMVDKAVALLANLSAVGEGRQAIVREGGIPLLVETVDLGSQRGKENAASVLLQLCLNSPKFCTLVLQEGAIPPLVALSQSGTQRAKEKAQQLLSHFRNQRDARMKKGRS.

The stretch at 146 to 217 forms a coiled coil; it reads LMELMENALR…EQTEQLIELV (72 aa). A U-box domain is found at 237–311; that stretch reads SIPPYFRCPL…ASWLEANRIN (75 aa). A compositionally biased stretch (polar residues) spans 424-434; the sequence is ILGNHQSSSEM. The segment at 424–448 is disordered; that stretch reads ILGNHQSSSEMSPKKNLESSNNVNH. ARM repeat units follow at residues 504 to 543, 545 to 584, 586 to 626, 628 to 666, and 668 to 707; these read IENR…NLSI, ELNK…SLSV, QVNR…NLSI, HDNK…NLSA, and GEGR…QLCL.

It carries out the reaction S-ubiquitinyl-[E2 ubiquitin-conjugating enzyme]-L-cysteine + [acceptor protein]-L-lysine = [E2 ubiquitin-conjugating enzyme]-L-cysteine + N(6)-ubiquitinyl-[acceptor protein]-L-lysine.. It functions in the pathway protein modification; protein ubiquitination. Functions as an E3 ubiquitin ligase. This Arabidopsis thaliana (Mouse-ear cress) protein is U-box domain-containing protein 3 (PUB3).